The following is a 406-amino-acid chain: Arginine biosynthesis bifunctional protein ArgJ (406 aa).

Threonine 152, lysine 179, threonine 190, glutamate 277, asparagine 401, and serine 406 together coordinate substrate. The Nucleophile role is filled by threonine 190.

The protein belongs to the ArgJ family. Heterotetramer of two alpha and two beta chains.

The protein resides in the cytoplasm. The catalysed reaction is N(2)-acetyl-L-ornithine + L-glutamate = N-acetyl-L-glutamate + L-ornithine. The enzyme catalyses L-glutamate + acetyl-CoA = N-acetyl-L-glutamate + CoA + H(+). It participates in amino-acid biosynthesis; L-arginine biosynthesis; L-ornithine and N-acetyl-L-glutamate from L-glutamate and N(2)-acetyl-L-ornithine (cyclic): step 1/1. The protein operates within amino-acid biosynthesis; L-arginine biosynthesis; N(2)-acetyl-L-ornithine from L-glutamate: step 1/4. Its function is as follows. Catalyzes two activities which are involved in the cyclic version of arginine biosynthesis: the synthesis of N-acetylglutamate from glutamate and acetyl-CoA as the acetyl donor, and of ornithine by transacetylation between N(2)-acetylornithine and glutamate. The chain is Arginine biosynthesis bifunctional protein ArgJ from Neisseria gonorrhoeae (strain ATCC 700825 / FA 1090).